Here is a 518-residue protein sequence, read N- to C-terminus: Cell wall biosynthesis protein LcpA (518 aa).

Residues 1–31 (MTEKYRPVRDIKPAPAAMQSTKQAGHPVFRS) lie on the Cytoplasmic side of the membrane. The helical transmembrane segment at 32–52 (VVAFVSVLVLLVSGLGYLAVG) threads the bilayer. Topologically, residues 53–518 (KVDGVASGNL…AGGDGPRCVN (466 aa)) are periplasmic. Residues 485 to 518 (AVTSSTVGQPGADVGEPIESPEFDAGGDGPRCVN) are disordered.

It belongs to the LytR/CpsA/Psr (LCP) family. Forms homodimers and homotetramers.

It is found in the cell inner membrane. Involved in cell wall biosynthesis. May be responsible for the transfer of arabinogalactan onto peptidoglycan. In vitro, has pyrophosphatase activity. This chain is Cell wall biosynthesis protein LcpA, found in Corynebacterium glutamicum (strain ATCC 13032 / DSM 20300 / JCM 1318 / BCRC 11384 / CCUG 27702 / LMG 3730 / NBRC 12168 / NCIMB 10025 / NRRL B-2784 / 534).